The primary structure comprises 347 residues: Protein-glutamate methylesterase/protein-glutamine glutaminase 4 (347 aa).

Residues 3 to 121 (KVLIVDDSAS…HPNHEREARS (119 aa)) enclose the Response regulatory domain. Asp-54 is subject to 4-aspartylphosphate. Residues 157-342 (PARLKAVAIG…PDRIVTALTS (186 aa)) form the CheB-type methylesterase domain. Active-site residues include Ser-168, His-195, and Asp-289.

The protein belongs to the CheB family. In terms of processing, phosphorylated by CheA. Phosphorylation of the N-terminal regulatory domain activates the methylesterase activity.

The protein resides in the cytoplasm. It catalyses the reaction [protein]-L-glutamate 5-O-methyl ester + H2O = L-glutamyl-[protein] + methanol + H(+). The catalysed reaction is L-glutaminyl-[protein] + H2O = L-glutamyl-[protein] + NH4(+). Its function is as follows. Involved in chemotaxis. Part of a chemotaxis signal transduction system that modulates chemotaxis in response to various stimuli. Catalyzes the demethylation of specific methylglutamate residues introduced into the chemoreceptors (methyl-accepting chemotaxis proteins or MCP) by CheR. Also mediates the irreversible deamidation of specific glutamine residues to glutamic acid. This chain is Protein-glutamate methylesterase/protein-glutamine glutaminase 4, found in Geobacter metallireducens (strain ATCC 53774 / DSM 7210 / GS-15).